Here is a 2850-residue protein sequence, read N- to C-terminus: Mucin-6 (2850 aa).

The N-terminal stretch at 1–22 (MLRVRQLLLLLLFRGPLIDAGA) is a signal peptide. The region spanning 43-256 (GWCSTWGAGH…KLDDPNEICA (214 aa)) is the VWFD 1 domain. 2 disulfides stabilise this stretch: cysteine 45–cysteine 218 and cysteine 67–cysteine 255. Asparagine 94 carries N-linked (GlcNAc...) asparagine glycosylation. The disordered stretch occupies residues 160–183 (HLTEGQGGDEVGTPGTLKQESKGS). Residue asparagine 310 is glycosylated (N-linked (GlcNAc...) asparagine). Residues 344 to 399 (CPANQVYQECGEVCIKTCSNPQHSCSSPCTFGCFCPHGTLLDDISGNQSCVPVNQC) enclose the TIL 1 domain. Residues 437-621 (GHCSLEGGSF…ALEREMDPCS (185 aa)) form the VWFD 2 domain. 2 disulfide bridges follow: cysteine 439-cysteine 575 and cysteine 461-cysteine 620. 2 N-linked (GlcNAc...) asparagine glycosylation sites follow: asparagine 528 and asparagine 701. Residues 806 to 869 (CPEPKTFQSC…DGQCVPAEEC (64 aa)) enclose the TIL 2 domain. Residues 908 to 1080 (STCVLYGEGH…NSWKESPLCG (173 aa)) enclose the VWFD 3 domain. Disulfide bonds link cysteine 910/cysteine 1044, cysteine 932/cysteine 1079, cysteine 941/cysteine 1041, and cysteine 959/cysteine 966. N-linked (GlcNAc...) asparagine glycosylation is found at asparagine 1017 and asparagine 1221. Positions 1263–1281 (EFHSSTSANTPVAPSYLPG) are enriched in low complexity. Disordered regions lie at residues 1263 to 1363 (EFHS…TAEL), 1377 to 1400 (GMST…THRV), 1466 to 1504 (VSAN…PSTT), 1580 to 1600 (TPPV…RTTH), 1626 to 1650 (IASP…TSSV), 1705 to 1813 (TKTS…SLST), 1877 to 1942 (QTKS…RTTH), 1968 to 1992 (IASP…TSSV), 2049 to 2119 (TSFS…PSTT), 2219 to 2254 (QTKS…TTNS), 2276 to 2295 (IAHT…SSTT), 2306 to 2338 (EQST…SPTD), 2370 to 2473 (TTPP…FRTP), 2511 to 2621 (PTNP…TFVS), 2634 to 2674 (PTIH…KSTT), and 2692 to 2761 (STMG…GTCS). A compositionally biased stretch (polar residues) spans 1294 to 1312 (EELTVWTTPKESTVSSGEY). Over residues 1345 to 1363 (TSKPTASSLSSSTKTTAEL) the composition is skewed to low complexity. Composition is skewed to polar residues over residues 1378–1399 (MSTS…TTHR) and 1466–1484 (VSAN…PVVH). 8 tandem repeats follow at residues 1440 to 1555 (TQNL…PTTE), 1556 to 1712 (GLNT…FSTD), 1713 to 1885 (RTST…FSTD), 1886 to 2054 (RTSA…FSTD), 2055 to 2227 (RTST…FSTD), 2228 to 2396 (RTST…FSTE), 2397 to 2563 (RTST…FPTT), and 2564 to 2671 (RTST…FSSK). The segment at 1440–2671 (TQNLFSTAPH…VPTFSSFSSK (1232 aa)) is approximate repeats. Over residues 1485 to 1504 (TTSGTSSSPQTPRTTHPSTT) the composition is skewed to low complexity. Residues 1626-1639 (IASPTPSAPQTSLA) are compositionally biased toward polar residues. Over residues 1705–1719 (TKTSFSTDRTSTSTS) the composition is skewed to low complexity. A compositionally biased stretch (polar residues) spans 1720–1757 (APHLSETSAVTAHQSTPTAVSANSIKPTMSSTGTPVVH). A compositionally biased stretch (low complexity) spans 1758–1777 (TTSGTTSSPQTPRTTHPSTT). A compositionally biased stretch (polar residues) spans 1778 to 1813 (VAVSGTVHTTGLPSGTSVHTTTNFPTHSGPQSSLST). Low complexity predominate over residues 1893–1942 (SQPSTVTPTQSTPIPATTNSLMTTGGLTGTPPVHTTSGTTSSPQTPRTTH). Positions 1968–1981 (IASPTPSAPQTSLA) are enriched in polar residues. Residues 2049-2061 (TSFSTDRTSTSTS) show a composition bias toward low complexity. Polar residues predominate over residues 2062-2099 (APHLSETSAVTAHQSTPTAVSANSIKPTMSSTGTPVVH). Residues 2100 to 2119 (TTSGTTSSPQTPRTTHPSTT) show a composition bias toward low complexity. Over residues 2227–2238 (DRTSTPHLSQSS) the composition is skewed to polar residues. A compositionally biased stretch (low complexity) spans 2282-2295 (TTHSLPTAASSSTT). Low complexity predominate over residues 2370–2384 (TTPPNTSTPVTHSTS). Over residues 2385–2429 (ATTEAQGSFSTERTSTSYLSHPSSTTVHQSTAGPVITSIKSTMGV) the composition is skewed to polar residues. Positions 2436-2456 (HTTSGTTSSPQTPHSTHPIST) are enriched in low complexity. The segment covering 2457–2466 (AAISRTTGIS) has biased composition (polar residues). Low complexity predominate over residues 2516-2533 (SVSSASTSRPLSTSLPTT). Residues 2534 to 2560 (IKGTGTPQTPVSDINTTSATTQAHSSF) are compositionally biased toward polar residues. Residues 2561–2584 (PTTRTSTSHLSLPSSMTSTLTPAS) show a composition bias toward low complexity. Polar residues predominate over residues 2585-2601 (RSASTLQYTPTPSSVSH). The segment covering 2639–2674 (TPTPSSRPTSSTGLLSTSKTTSHVPTFSSFSSKSTT) has biased composition (low complexity). The span at 2692–2725 (STMGMTNLPSSGSPDINHTTRPPGSSPLPTSAFL) shows a compositional bias: polar residues. Over residues 2726–2759 (SRSTSPTGSSSPSTPVSSSNPDSSVSSPPSHPGT) the composition is skewed to low complexity. Disulfide bonds link cysteine 2760–cysteine 2807, cysteine 2774–cysteine 2821, cysteine 2783–cysteine 2841, and cysteine 2787–cysteine 2843. Residues 2760-2849 (CSLQEEEHQI…SCVCSPLQCK (90 aa)) enclose the CTCK domain.

In terms of assembly, multimer; disulfide-linked. O-glycosylated. In terms of tissue distribution, expressed in stomach, duodenum and small intestine.

It localises to the secreted. In terms of biological role, may provide a mechanism for modulation of the composition of the protective mucus layer related to acid secretion or the presence of bacteria and noxious agents in the lumen. Plays an important role in the cytoprotection of epithelial surfaces and are used as tumor markers in a variety of cancers. May play a role in epithelial organogenesis. This chain is Mucin-6 (Muc6), found in Mus musculus (Mouse).